Reading from the N-terminus, the 96-residue chain is Co-chaperonin GroES (96 aa).

The protein belongs to the GroES chaperonin family. In terms of assembly, heptamer of 7 subunits arranged in a ring. Interacts with the chaperonin GroEL.

It localises to the cytoplasm. Functionally, together with the chaperonin GroEL, plays an essential role in assisting protein folding. The GroEL-GroES system forms a nano-cage that allows encapsulation of the non-native substrate proteins and provides a physical environment optimized to promote and accelerate protein folding. GroES binds to the apical surface of the GroEL ring, thereby capping the opening of the GroEL channel. This chain is Co-chaperonin GroES, found in Vibrio atlanticus (strain LGP32) (Vibrio splendidus (strain Mel32)).